Here is a 1154-residue protein sequence, read N- to C-terminus: DNA-directed RNA polymerase subunit beta' (1154 aa).

Zn(2+) contacts are provided by Cys-60, Cys-62, Cys-75, and Cys-78. Mg(2+) contacts are provided by Asp-449, Asp-451, and Asp-453. The Zn(2+) site is built by Cys-774, Cys-848, Cys-855, and Cys-858.

The protein belongs to the RNA polymerase beta' chain family. The RNAP catalytic core consists of 2 alpha, 1 beta, 1 beta' and 1 omega subunit. When a sigma factor is associated with the core the holoenzyme is formed, which can initiate transcription. Mg(2+) is required as a cofactor. Requires Zn(2+) as cofactor.

The enzyme catalyses RNA(n) + a ribonucleoside 5'-triphosphate = RNA(n+1) + diphosphate. In terms of biological role, DNA-dependent RNA polymerase catalyzes the transcription of DNA into RNA using the four ribonucleoside triphosphates as substrates. This chain is DNA-directed RNA polymerase subunit beta', found in Desulforudis audaxviator (strain MP104C).